A 146-amino-acid chain; its full sequence is UPF0260 protein Sden_1632 (146 aa).

It belongs to the UPF0260 family.

The sequence is that of UPF0260 protein Sden_1632 from Shewanella denitrificans (strain OS217 / ATCC BAA-1090 / DSM 15013).